Reading from the N-terminus, the 462-residue chain is Glutamate--tRNA ligase 1 (462 aa).

A 'HIGH' region motif is present at residues 8-18; the sequence is PSPTGYLHIGG. The short motif at 236-240 is the 'KMSKS' region element; that stretch reads KLSKR. Lys239 provides a ligand contact to ATP.

It belongs to the class-I aminoacyl-tRNA synthetase family. Glutamate--tRNA ligase type 1 subfamily. In terms of assembly, monomer.

Its subcellular location is the cytoplasm. It catalyses the reaction tRNA(Glu) + L-glutamate + ATP = L-glutamyl-tRNA(Glu) + AMP + diphosphate. In terms of biological role, catalyzes the attachment of glutamate to tRNA(Glu) in a two-step reaction: glutamate is first activated by ATP to form Glu-AMP and then transferred to the acceptor end of tRNA(Glu). In Sulfurovum sp. (strain NBC37-1), this protein is Glutamate--tRNA ligase 1.